The primary structure comprises 295 residues: Protease HtpX (295 aa).

2 helical membrane passes run 4–24 (ILLF…TLSL) and 41–61 (SSLL…SLFI). His-147 is a Zn(2+) binding site. The active site involves Glu-148. His-151 contacts Zn(2+). 2 helical membrane-spanning segments follow: residues 158–178 (VTLA…ARII) and 199–219 (VATI…VMWF). Residue Glu-224 coordinates Zn(2+).

The protein belongs to the peptidase M48B family. Requires Zn(2+) as cofactor.

It is found in the cell inner membrane. In Pseudomonas putida (strain W619), this protein is Protease HtpX.